The chain runs to 296 residues: Acetylglutamate kinase (296 aa).

Substrate-binding positions include 66-67 (GG), arginine 88, and asparagine 191.

This sequence belongs to the acetylglutamate kinase family. ArgB subfamily.

The protein localises to the cytoplasm. The enzyme catalyses N-acetyl-L-glutamate + ATP = N-acetyl-L-glutamyl 5-phosphate + ADP. The protein operates within amino-acid biosynthesis; L-arginine biosynthesis; N(2)-acetyl-L-ornithine from L-glutamate: step 2/4. In terms of biological role, catalyzes the ATP-dependent phosphorylation of N-acetyl-L-glutamate. The sequence is that of Acetylglutamate kinase from Lawsonia intracellularis (strain PHE/MN1-00).